The chain runs to 360 residues: Peptide chain release factor 1 (360 aa).

Position 235 is an N5-methylglutamine (glutamine 235).

It belongs to the prokaryotic/mitochondrial release factor family. In terms of processing, methylated by PrmC. Methylation increases the termination efficiency of RF1.

The protein resides in the cytoplasm. Its function is as follows. Peptide chain release factor 1 directs the termination of translation in response to the peptide chain termination codons UAG and UAA. This chain is Peptide chain release factor 1, found in Burkholderia mallei (strain NCTC 10247).